The primary structure comprises 502 residues: Mannitol 2-dehydrogenase (502 aa).

37–48 (IVHVGVGGFHRA) is a binding site for NAD(+).

Belongs to the mannitol dehydrogenase family. As to quaternary structure, monomer.

The enzyme catalyses D-mannitol + NAD(+) = D-fructose + NADH + H(+). Catalyzes the NAD(H)-dependent interconversion of D-fructose and D-mannitol in the mannitol metabolic pathway. This chain is Mannitol 2-dehydrogenase, found in Aspergillus oryzae (strain ATCC 42149 / RIB 40) (Yellow koji mold).